Reading from the N-terminus, the 906-residue chain is Protein translocase subunit SecA (906 aa).

Residues Gln87, 105–109, and Asp507 contribute to the ATP site; that span reads GEGKT. Positions 890, 892, 901, and 902 each coordinate Zn(2+).

This sequence belongs to the SecA family. As to quaternary structure, monomer and homodimer. Part of the essential Sec protein translocation apparatus which comprises SecA, SecYEG and auxiliary proteins SecDF-YajC and YidC. It depends on Zn(2+) as a cofactor.

It is found in the cell inner membrane. Its subcellular location is the cytoplasm. The enzyme catalyses ATP + H2O + cellular proteinSide 1 = ADP + phosphate + cellular proteinSide 2.. Functionally, part of the Sec protein translocase complex. Interacts with the SecYEG preprotein conducting channel. Has a central role in coupling the hydrolysis of ATP to the transfer of proteins into and across the cell membrane, serving both as a receptor for the preprotein-SecB complex and as an ATP-driven molecular motor driving the stepwise translocation of polypeptide chains across the membrane. The sequence is that of Protein translocase subunit SecA from Thiobacillus denitrificans (strain ATCC 25259 / T1).